An 89-amino-acid chain; its full sequence is Small ribosomal subunit protein bS20 (89 aa).

It belongs to the bacterial ribosomal protein bS20 family.

In terms of biological role, binds directly to 16S ribosomal RNA. This chain is Small ribosomal subunit protein bS20, found in Wolbachia pipientis wMel.